The primary structure comprises 215 residues: Large ribosomal subunit protein bL25 (215 aa).

The interval Asp170–Lys215 is disordered. 2 stretches are compositionally biased toward acidic residues: residues Thr183–Glu197 and Asp206–Lys215.

Belongs to the bacterial ribosomal protein bL25 family. CTC subfamily. Part of the 50S ribosomal subunit; part of the 5S rRNA/L5/L18/L25 subcomplex. Contacts the 5S rRNA. Binds to the 5S rRNA independently of L5 and L18.

This is one of the proteins that binds to the 5S RNA in the ribosome where it forms part of the central protuberance. The polypeptide is Large ribosomal subunit protein bL25 (Oceanobacillus iheyensis (strain DSM 14371 / CIP 107618 / JCM 11309 / KCTC 3954 / HTE831)).